We begin with the raw amino-acid sequence, 225 residues long: Ribosomal RNA small subunit methyltransferase G (225 aa).

S-adenosyl-L-methionine-binding positions include glycine 71, leucine 76, 121 to 122 (AE), and arginine 139. Residues 204-225 (VVEARRATPSNGRGRPGRSSRR) form a disordered region.

It belongs to the methyltransferase superfamily. RNA methyltransferase RsmG family.

It is found in the cytoplasm. Functionally, specifically methylates the N7 position of guanine in position 518 of 16S rRNA. This chain is Ribosomal RNA small subunit methyltransferase G, found in Mycobacterium sp. (strain KMS).